The primary structure comprises 308 residues: Glutamyl-Q tRNA(Asp) synthetase (308 aa).

L-glutamate contacts are provided by residues 19–23 (RFAPS) and glutamate 55. A 'HIGH' region motif is present at residues 22–32 (PSPSGELHFGS). 4 residues coordinate Zn(2+): cysteine 111, cysteine 113, tyrosine 125, and cysteine 129. Residues tyrosine 182 and arginine 200 each coordinate L-glutamate. Residues 238-242 (KLSKQ) carry the 'KMSKS' region motif. Lysine 241 contributes to the ATP binding site.

This sequence belongs to the class-I aminoacyl-tRNA synthetase family. GluQ subfamily. It depends on Zn(2+) as a cofactor.

Its function is as follows. Catalyzes the tRNA-independent activation of glutamate in presence of ATP and the subsequent transfer of glutamate onto a tRNA(Asp). Glutamate is transferred on the 2-amino-5-(4,5-dihydroxy-2-cyclopenten-1-yl) moiety of the queuosine in the wobble position of the QUC anticodon. In Escherichia coli (strain K12 / MC4100 / BW2952), this protein is Glutamyl-Q tRNA(Asp) synthetase.